A 501-amino-acid polypeptide reads, in one-letter code: DELTA-alicitoxin-Pse2a (501 aa).

An N-terminal signal peptide occupies residues 1 to 22; it reads MSPYFKLSSALIFLAITMEALC. A propeptide spanning residues 23–35 is cleaved from the precursor; sequence SPIENTSTSNKDN. An MACPF domain is found at 23–359; it reads SPIENTSTSN…GFLHFGCSYL (337 aa). A coiled-coil region spans residues 135–159; sequence AAVTNNIASSEEEVQGLSLNLKAYS. One can recognise an EGF-like domain in the interval 388-422; sequence VCKVGPEGCQHHEDCHYRAAFWCECGGPYDLARTC. 3 cysteine pairs are disulfide-bonded: cysteine 389-cysteine 402, cysteine 396-cysteine 410, and cysteine 412-cysteine 422.

Its subcellular location is the secreted. The protein localises to the nematocyst. Its function is as follows. Causes lethal toxicity to the shrimp Palaemon paucidence, and hemolytic activity toward sheep red blood cells. The polypeptide is DELTA-alicitoxin-Pse2a (Phyllodiscus semoni (Night anemone)).